The following is a 131-amino-acid chain: Small ribosomal subunit protein uS8 (131 aa).

The protein belongs to the universal ribosomal protein uS8 family. As to quaternary structure, part of the 30S ribosomal subunit. Contacts proteins S5 and S12.

Functionally, one of the primary rRNA binding proteins, it binds directly to 16S rRNA central domain where it helps coordinate assembly of the platform of the 30S subunit. This chain is Small ribosomal subunit protein uS8, found in Rhizorhabdus wittichii (strain DSM 6014 / CCUG 31198 / JCM 15750 / NBRC 105917 / EY 4224 / RW1) (Sphingomonas wittichii).